Reading from the N-terminus, the 425-residue chain is tRNA(Ile)-lysidine synthase (425 aa).

Residue 37-42 (SGGKDS) coordinates ATP.

Belongs to the tRNA(Ile)-lysidine synthase family.

It localises to the cytoplasm. It carries out the reaction cytidine(34) in tRNA(Ile2) + L-lysine + ATP = lysidine(34) in tRNA(Ile2) + AMP + diphosphate + H(+). In terms of biological role, ligates lysine onto the cytidine present at position 34 of the AUA codon-specific tRNA(Ile) that contains the anticodon CAU, in an ATP-dependent manner. Cytidine is converted to lysidine, thus changing the amino acid specificity of the tRNA from methionine to isoleucine. The sequence is that of tRNA(Ile)-lysidine synthase from Leptospira borgpetersenii serovar Hardjo-bovis (strain JB197).